Here is a 180-residue protein sequence, read N- to C-terminus: Pro-glucagon (180 aa).

Positions 1–20 (MKSLYFVAGLFVMLVQGSWQ) are cleaved as a signal peptide. The span at 25 to 35 (NTEEKSSSFPA) shows a compositional bias: polar residues. A disordered region spans residues 25–59 (NTEEKSSSFPAPQTDPLGDPDQINEDKRHSQGTFT). The residue at position 54 (serine 54) is a Phosphoserine. Positions 84-89 (NKNNIA) are excised as a propeptide. A phosphoserine mark is found at serine 105 and serine 108. Arginine 127 is modified (arginine amide). The propeptide occupies 131–145 (DFPEEVNIVEELRRR). 2 positions are modified to phosphoserine: serine 150 and serine 152.

This sequence belongs to the glucagon family. Proglucagon is post-translationally processed in a tissue-specific manner in pancreatic A cells and intestinal L cells. In pancreatic A cells, the major bioactive hormone is glucagon cleaved by PCSK2/PC2. In the intestinal L cells PCSK1/PC1 liberates GLP-1, GLP-2, glicentin and oxyntomodulin. GLP-1 is further N-terminally truncated by post-translational processing in the intestinal L cells resulting in GLP-1(7-37) GLP-1-(7-36)amide. The C-terminal amidation is neither important for the metabolism of GLP-1 nor for its effects on the endocrine pancreas. Glucagon is secreted in the A cells of the islets of Langerhans. GLP-1, GLP-2, oxyntomodulin and glicentin are secreted from enteroendocrine cells throughout the gastrointestinal tract.

The protein resides in the secreted. Its function is as follows. Plays a key role in glucose metabolism and homeostasis. Regulates blood glucose by increasing gluconeogenesis and decreasing glycolysis. A counterregulatory hormone of insulin, raises plasma glucose levels in response to insulin-induced hypoglycemia. Plays an important role in initiating and maintaining hyperglycemic conditions in diabetes. Functionally, potent stimulator of glucose-dependent insulin release. Also stimulates insulin release in response to IL6. Plays important roles on gastric motility and the suppression of plasma glucagon levels. May be involved in the suppression of satiety and stimulation of glucose disposal in peripheral tissues, independent of the actions of insulin. Has growth-promoting activities on intestinal epithelium. May also regulate the hypothalamic pituitary axis (HPA) via effects on LH, TSH, CRH, oxytocin, and vasopressin secretion. Increases islet mass through stimulation of islet neogenesis and pancreatic beta cell proliferation. Inhibits beta cell apoptosis. Stimulates intestinal growth and up-regulates villus height in the small intestine, concomitant with increased crypt cell proliferation and decreased enterocyte apoptosis. The gastrointestinal tract, from the stomach to the colon is the principal target for GLP-2 action. Plays a key role in nutrient homeostasis, enhancing nutrient assimilation through enhanced gastrointestinal function, as well as increasing nutrient disposal. Stimulates intestinal glucose transport and decreases mucosal permeability. In terms of biological role, significantly reduces food intake. Inhibits gastric emptying in humans. Suppression of gastric emptying may lead to increased gastric distension, which may contribute to satiety by causing a sensation of fullness. Its function is as follows. May modulate gastric acid secretion and the gastro-pyloro-duodenal activity. May play an important role in intestinal mucosal growth in the early period of life. The sequence is that of Pro-glucagon (GCG) from Bos taurus (Bovine).